The primary structure comprises 271 residues: uncharacterized protein (271 aa).

It belongs to the metallo-dependent hydrolases superfamily. Peptidase M19 family.

This is an uncharacterized protein from Klebsiella pneumoniae.